The chain runs to 82 residues: Protein transport protein SBH1 (82 aa).

The interval 1-36 is disordered; that stretch reads MSSPTPPGGQRTLQKRKQGSSQKVAASAPKKNTNSN. The Cytoplasmic segment spans residues 1-53; it reads MSSPTPPGGQRTLQKRKQGSSQKVAASAPKKNTNSNNSILKIYSDEATGLRVD. Polar residues predominate over residues 19-36; it reads GSSQKVAASAPKKNTNSN. Residues 54 to 74 traverse the membrane as a helical segment; the sequence is PLVVLFLAVGFIFSVVALHVI.

This sequence belongs to the SEC61-beta family. Component of the heterotrimeric Sec61 complex, which is composed of SSH1, SBH1 and SSS1. Presumably three to four Sec61 heterotrimers assemble into an oligomeric ring with a central aqueous pore. In cotranslational ER import, the pore diameter varies from 9-15 A in a ribosome-free resting state to 40-60 A in a functional state when associated with the ribosome. The Sec61 complex is part of a channel-forming translocon complex whose composition seem to change dependent upon different functional states. During post-translational ER import the Sec61 complex associates with the Sec62/63 complex to form the Sec complex. SBH1 interacts OST2, OST4 and WBP1 components of the OT complex.

It is found in the endoplasmic reticulum membrane. Part of the Sec61 complex, which is the major component of a channel-forming translocon complex that mediates protein translocation across the endoplasmic reticulum (ER). The functional states of the translocon complex include co- and post-translational ER import, cotranslational membrane protein integration and retrograde transport of misfolded proteins out of the ER. In the cotranslational pathway, ribosomes synthesizing presecretory proteins are targeted to the translocon by the cytosolic signal recognition particle (SRP) and its ER-localized receptor. The association of the Sec61 complex with the ribosome is mediated by the 28S rRNA of the large ribosomal subunit. SRP-independent post-translational translocation requires the association of additional factors, such as the Sec62/63 complex and KAR2. The sequence is that of Protein transport protein SBH1 (SBH1) from Saccharomyces cerevisiae (strain ATCC 204508 / S288c) (Baker's yeast).